A 277-amino-acid chain; its full sequence is Release factor glutamine methyltransferase (277 aa).

Residues 119–123, Asp-142, Trp-170, and Asn-184 contribute to the S-adenosyl-L-methionine site; that span reads GTGCG. 184 to 187 is a substrate binding site; sequence NPPY.

Belongs to the protein N5-glutamine methyltransferase family. PrmC subfamily.

The enzyme catalyses L-glutaminyl-[peptide chain release factor] + S-adenosyl-L-methionine = N(5)-methyl-L-glutaminyl-[peptide chain release factor] + S-adenosyl-L-homocysteine + H(+). Methylates the class 1 translation termination release factors RF1/PrfA and RF2/PrfB on the glutamine residue of the universally conserved GGQ motif. This is Release factor glutamine methyltransferase from Buchnera aphidicola subsp. Baizongia pistaciae (strain Bp).